The primary structure comprises 443 residues: Trigger factor (443 aa).

One can recognise a PPIase FKBP-type domain in the interval 161-246 (GDKVVIDFQG…IKKIMEGKLP (86 aa)).

It belongs to the FKBP-type PPIase family. Tig subfamily.

It localises to the cytoplasm. It catalyses the reaction [protein]-peptidylproline (omega=180) = [protein]-peptidylproline (omega=0). In terms of biological role, involved in protein export. Acts as a chaperone by maintaining the newly synthesized protein in an open conformation. Functions as a peptidyl-prolyl cis-trans isomerase. This chain is Trigger factor, found in Legionella pneumophila (strain Lens).